The primary structure comprises 217 residues: MNEDPQKKDEPFFKDVEFKASYGKADQIPSQGTPQIAFAGRSNAGKSSLLNAILERKSLAKVSSTPGKTKLLNFFFVNHSIYLVDLPGFGYSANSHKDHEAMMGLLMDYLNLAKDLKCLFLVCDSQRELPEEELELIGTCFERNIKPVLVRTKIDKLNQSDLSKLRKKMKNIHELYPMLETVLVSNKSGKGLPELRKIVYSLIETVKNRLERIEEIS.

Residues 32 to 205 enclose the EngB-type G domain; the sequence is GTPQIAFAGR…RKIVYSLIET (174 aa). GTP-binding positions include 40–47, 67–71, 85–88, 152–155, and 184–186; these read GRSNAGKS, GKTKL, DLPG, TKID, and VSN. Mg(2+)-binding residues include Ser-47 and Thr-69.

The protein belongs to the TRAFAC class TrmE-Era-EngA-EngB-Septin-like GTPase superfamily. EngB GTPase family. It depends on Mg(2+) as a cofactor.

In terms of biological role, necessary for normal cell division and for the maintenance of normal septation. The protein is Probable GTP-binding protein EngB of Leptospira interrogans serogroup Icterohaemorrhagiae serovar copenhageni (strain Fiocruz L1-130).